The following is a 255-amino-acid chain: Spectinomycin 9-adenylyltransferase (255 aa).

It carries out the reaction spectinomycin + ATP = 9-O-adenylylspectinomycin + diphosphate. In terms of biological role, mediates bacterial resistance to the antibiotic spectinomycin but not streptomycin. This Enterococcus faecalis (Streptococcus faecalis) protein is Spectinomycin 9-adenylyltransferase.